A 129-amino-acid polypeptide reads, in one-letter code: Cytochrome c' (129 aa).

Residues R12, Q13, T69, E70, C119, C122, and H123 each coordinate heme c.

In terms of processing, binds 1 heme c group covalently per subunit.

Functionally, cytochrome c' is the most widely occurring bacterial c-type cytochrome. Cytochromes c' are high-spin proteins and the heme has no sixth ligand. Their exact function is not known. The sequence is that of Cytochrome c' from Rubrivivax gelatinosus (Rhodocyclus gelatinosus).